The sequence spans 405 residues: MKHFPSKVLTTAILATFCSGALAATNDDDVKKAATVAIAAAYNNGQEINGFKAGETIYDIDEDGTITKKDATAADVEADDFKGLGLKKVVTNLTKTVNENKQNVDAKVKAAESEIEKLTTKLADTDAALADTDAALDATTNALNKLGENITTFAEETKTNIVKIDEKLEAVADTVDKHAEAFNDIADSLDETNTKADEAVKTANEAKQTAEETKQNVDAKVKAAETAAGKAEAAAGTANTAADKAEAVAAKVTDIKADIATNKDNIAKKANSADVYTREESDSKFVRIDGLNATTEKLDTRLASAEKSIADHDTRLNGLDKTVSDLRKETRQGLAEQAALSGLFQPYNVGRFNVTAAVGGYKSESAVAIGTGFRFTENFAAKAGVAVGTSSGSSAAYHVGVNYEW.

The signal sequence occupies residues 1–23 (MKHFPSKVLTTAILATFCSGALA). The head domain stretch occupies residues 24 to 87 (ATNDDDVKKA…ADDFKGLGLK (64 aa)). 2 coiled-coil regions span residues 87 to 170 (KKVV…KLEA) and 181 to 329 (AFND…LRKE). The coiled stalk domain stretch occupies residues 88–350 (KVVTNLTKTV…SGLFQPYNVG (263 aa)). Residues 312–350 (HDTRLNGLDKTVSDLRKETRQGLAEQAALSGLFQPYNVG) form an outer membrane translocation of the passenger domain region. 4 beta stranded membrane passes run 350 to 360 (GRFNVTAAVGG), 364 to 375 (ESAVAIGTGFRF), 382 to 388 (KAGVAVG), and 394 to 405 (SAAYHVGVNYEW). Positions 351–405 (RFNVTAAVGGYKSESAVAIGTGFRFTENFAAKAGVAVGTSSGSSAAYHVGVNYEW) are translocator domain.

This sequence belongs to the autotransporter-2 (AT-2) (TC 1.B.40) family. In terms of assembly, the non-membrane anchored protein (residues 24-350) probably forms a homotrimer; it is assumed the mature protein forms trimers in situ. The mature protein without the membrane-targeting segment (residues 24-350) binds to human heat shock 90 beta protein (HSP90AB1) both in vitro and when incubated with human monocytes. A subsequent paper showed binding of the same fragment in epithelial cells to both HSP90AA1 and HSP90AB1; in vitro the interaction is stabilized by ADP and the Hsp90 inhibitor 17-AAG (17-N-allylamino-17-demethoxygeldanamycin), in vitro and in vivo both interactions are inhibited by ATP. Binds human oxidized low-density lipoprotein receptor 1 (LOX-1, OLR1) in protein microarrays, in solution and when LOX-1 is expressed on the cell surface. Binds via the head and the beginning of the coiled stalk (residues 24-170); binding can be abrogated by monoclonal antibodies against those specific regions of NadA. Other potential binding partners were identified but not characterized in the same study. Forms high molecular weight oligomers in whole cell extracts that are not disrupted by boiling in SDS buffer.

It localises to the cell outer membrane. The protein resides in the cell surface. Adheres to and induces bacterial uptake by human epithelial cells in a microfilament-dependent process. Binding is reduced by pronase treatment, suggesting there is a protein receptor on the human cells. Possible human protein receptors include integrin beta-1 (ITGB1) and oxidized low-density lipoprotein receptor 1 (OLR1). Binds to extracellular human Hsp90 (preferentially the beta isoform, HSP90AB1) on monocytes, binding stimulates monocytes in a TLR4-dependent fashion, polymixin B, which binds NadA, blocks the activation. Hsp90 is probably not the first receptor on human monocytes. Non-membrane anchored protein (residues 24-350) is internalized into human epithelial cells by hijacking the endosome recycling pathway and may be recycled back to the cell surface, which might aid transcellular trafficking of the bacteria. A bacterial cell surface protein; antisera against this protein induce complement-mediated killing of this and other strains. This Neisseria meningitidis serogroup B protein is Neisseria adhesin A.